The following is a 248-amino-acid chain: Octanoyltransferase (248 aa).

The 182-residue stretch at 53-234 folds into the BPL/LPL catalytic domain; that stretch reads ADTVDEIWIV…RLIANLDGES (182 aa). Residues 93-100, 165-167, and 178-180 contribute to the substrate site; these read RGGQITYH, ALG, and GLS. Residue C196 is the Acyl-thioester intermediate of the active site.

It belongs to the LipB family.

It localises to the cytoplasm. It catalyses the reaction octanoyl-[ACP] + L-lysyl-[protein] = N(6)-octanoyl-L-lysyl-[protein] + holo-[ACP] + H(+). It functions in the pathway protein modification; protein lipoylation via endogenous pathway; protein N(6)-(lipoyl)lysine from octanoyl-[acyl-carrier-protein]: step 1/2. Its function is as follows. Catalyzes the transfer of endogenously produced octanoic acid from octanoyl-acyl-carrier-protein onto the lipoyl domains of lipoate-dependent enzymes. Lipoyl-ACP can also act as a substrate although octanoyl-ACP is likely to be the physiological substrate. The polypeptide is Octanoyltransferase (Burkholderia multivorans (strain ATCC 17616 / 249)).